Here is a 440-residue protein sequence, read N- to C-terminus: Ribosomal protein uS12 methylthiotransferase RimO (440 aa).

In terms of domain architecture, MTTase N-terminal spans 6–116; it reads PKVGFVSLGC…VVTAVHEVVP (111 aa). [4Fe-4S] cluster-binding residues include Cys-15, Cys-51, Cys-80, Cys-149, Cys-153, and Cys-156. Residues 135 to 373 enclose the Radical SAM core domain; sequence LTPRHYAYLK…MAHQQAISAA (239 aa). In terms of domain architecture, TRAM spans 376–440; that stretch reads QLKVGKEIEV…DEYDLWAELV (65 aa).

The protein belongs to the methylthiotransferase family. RimO subfamily. It depends on [4Fe-4S] cluster as a cofactor.

The protein localises to the cytoplasm. The enzyme catalyses L-aspartate(89)-[ribosomal protein uS12]-hydrogen + (sulfur carrier)-SH + AH2 + 2 S-adenosyl-L-methionine = 3-methylsulfanyl-L-aspartate(89)-[ribosomal protein uS12]-hydrogen + (sulfur carrier)-H + 5'-deoxyadenosine + L-methionine + A + S-adenosyl-L-homocysteine + 2 H(+). Catalyzes the methylthiolation of an aspartic acid residue of ribosomal protein uS12. This is Ribosomal protein uS12 methylthiotransferase RimO from Pseudomonas aeruginosa (strain UCBPP-PA14).